The chain runs to 177 residues: Interleukin-10 (177 aa).

Residues 1 to 19 form the signal peptide; it reads MPSSSAVLCCLVFLAGVAA. 2 disulfide bridges follow: Cys31/Cys127 and Cys81/Cys133. Asn135 is a glycosylation site (N-linked (GlcNAc...) asparagine).

The protein belongs to the IL-10 family. Homodimer. Interacts with IL10RA and IL10RB.

It localises to the secreted. Its function is as follows. Major immune regulatory cytokine that acts on many cells of the immune system where it has profound anti-inflammatory functions, limiting excessive tissue disruption caused by inflammation. Mechanistically, IL10 binds to its heterotetrameric receptor comprising IL10RA and IL10RB leading to JAK1 and STAT2-mediated phosphorylation of STAT3. In turn, STAT3 translocates to the nucleus where it drives expression of anti-inflammatory mediators. Targets antigen-presenting cells (APCs) such as macrophages and monocytes and inhibits their release of pro-inflammatory cytokines including granulocyte-macrophage colony-stimulating factor /GM-CSF, granulocyte colony-stimulating factor/G-CSF, IL-1 alpha, IL-1 beta, IL-6, IL-8 and TNF-alpha. Also interferes with antigen presentation by reducing the expression of MHC-class II and co-stimulatory molecules, thereby inhibiting their ability to induce T cell activation. In addition, controls the inflammatory response of macrophages by reprogramming essential metabolic pathways including mTOR signaling. In Ovis aries (Sheep), this protein is Interleukin-10 (IL10).